The sequence spans 211 residues: Probable endopeptidase cgR_2070 (211 aa).

Residues 1–35 (MGKHRRNNSNATRKAVAASAVALGATAAIASPAQA) form the signal peptide. The 115-residue stretch at 97–211 (ASTGQAIVDA…YMPFHSAVRF (115 aa)) folds into the NlpC/P60 domain. The active-site Nucleophile is cysteine 127. The Proton acceptor role is filled by histidine 175. Histidine 187 is an active-site residue.

The protein belongs to the peptidase C40 family.

It localises to the secreted. This is Probable endopeptidase cgR_2070 from Corynebacterium glutamicum (strain R).